The sequence spans 347 residues: Protein POOR HOMOLOGOUS SYNAPSIS 1 (347 aa).

It localises to the cytoplasm. Its function is as follows. Required for accurate chromosome segregation in meiosis. Required for pairing to occur between homologous chromosomes. Acts in early recombination steps and ensures pairing fidelity and proper repair of meiotic DNA double-strand-breaks. Regulates recombination and pairing of homologous chromosomes during meiotic prophase by controlling transport of RAD50 from cytoplasm to the nucleus. May affect pairing of the gene-rich fraction of the genome rather than preventing pairing between repetitive DNA elements. This is Protein POOR HOMOLOGOUS SYNAPSIS 1 from Zea mays (Maize).